We begin with the raw amino-acid sequence, 429 residues long: Phosphoribosylamine--glycine ligase (429 aa).

Residues 109–316 form the ATP-grasp domain; it reads KDFLARHHIP…LVELCLAACD (208 aa). 135–196 is a binding site for ATP; the sequence is LREKGAPIVV…EEFLDGEEAS (62 aa). The interval 209–231 is disordered; that stretch reads MATSQDHKRVGENDTGLNTGGMG. Residues glutamate 286 and asparagine 288 each contribute to the Mg(2+) site.

Belongs to the GARS family. Mg(2+) is required as a cofactor. The cofactor is Mn(2+).

The enzyme catalyses 5-phospho-beta-D-ribosylamine + glycine + ATP = N(1)-(5-phospho-beta-D-ribosyl)glycinamide + ADP + phosphate + H(+). It participates in purine metabolism; IMP biosynthesis via de novo pathway; N(1)-(5-phospho-D-ribosyl)glycinamide from 5-phospho-alpha-D-ribose 1-diphosphate: step 2/2. In Pasteurella multocida (strain Pm70), this protein is Phosphoribosylamine--glycine ligase.